The sequence spans 418 residues: MYKKIKLRDQQISELINLESKRQNSQIELIASENYASEDVILANGTSLSNKYGEGYPGKRYYGGCTFIDQIEKIAIERVKKLFKIEYANVQPYSGSSANAAVFAALLKPGDKILGLDLNAGGHLSHGYKINFSGMFYSGISYFLDENELLDYEAIEKIALKTKPNLIICGYSAYSRKIDFARFRQIADKVNAFLLADIAHIAGLIAAGQHPSPVGYAHIITSTTQKTLRGPRGGLILTSSKEIAAKIDKVVFPGIQGGPFFHTIAAKAVAFKEALEPWFKEYCAQIVKNAAHFASEFIKKGIRIVSQGTENHLFTIDVLSSYNLNGKQAQILLESVNIITNKNTIPNDTLSPFVTSGLRLGTPAMTSRGFKEQEFSQMAEIIDFVLRKKELNALEIKEIKKKVKILTKNFPIKKSYWP.

Residues Leu118 and 122 to 124 (GHL) contribute to the (6S)-5,6,7,8-tetrahydrofolate site. Residue Lys226 is modified to N6-(pyridoxal phosphate)lysine. Residue 351–353 (SPF) coordinates (6S)-5,6,7,8-tetrahydrofolate.

Belongs to the SHMT family. In terms of assembly, homodimer. The cofactor is pyridoxal 5'-phosphate.

It localises to the cytoplasm. The catalysed reaction is (6R)-5,10-methylene-5,6,7,8-tetrahydrofolate + glycine + H2O = (6S)-5,6,7,8-tetrahydrofolate + L-serine. It functions in the pathway one-carbon metabolism; tetrahydrofolate interconversion. Its function is as follows. Catalyzes the reversible interconversion of serine and glycine with tetrahydrofolate (THF) serving as the one-carbon carrier. This reaction serves as the major source of one-carbon groups required for the biosynthesis of purines, thymidylate, methionine, and other important biomolecules. This Mesomycoplasma hyopneumoniae (strain 7448) (Mycoplasma hyopneumoniae) protein is Probable serine hydroxymethyltransferase.